We begin with the raw amino-acid sequence, 116 residues long: Vesicle-associated membrane protein 2 (116 aa).

The segment at 1-33 is disordered; it reads MSATAATAPPAAPAGEGGPPAPPPNLTSNRRLQ. At S2 the chain carries N-acetylserine. At 2–94 the chain is on the cytoplasmic side; sequence SATAATAPPA…KRKYWWKNLK (93 aa). Residues 31 to 91 form the v-SNARE coiled-coil homology domain; the sequence is RLQQTQAQVD…AKLKRKYWWK (61 aa). Residues 92 to 116 are required for interaction with SEPT8; it reads NLKMMIILGVICAIILIIIIVYFST. Residues 95–114 traverse the membrane as a helical; Anchor for type IV membrane protein segment; sequence MMIILGVICAIILIIIIVYF. The Vesicular portion of the chain corresponds to 115-116; it reads ST.

The protein belongs to the synaptobrevin family. Part of the SNARE core complex containing SNAP25, VAMP2 and STX1A; this complex constitutes the basic catalytic machinery of the complex neurotransmitter release apparatus. Recruited to the SNARE complex following binding of the SNARE complex component STX1A to STXBP1. This complex binds to CPLX1. Interacts with POPDC1 and STX4. Interacts with VAPA and VAPB. Interacts with WDFY2, PRKCZ and PRKCI. Forms a complex with WDFY2 and PRKCZ. Interacts (via N-terminus) with KCNB1 (via N-terminus and C-terminus); stimulates the channel inactivation rate of KCNB1. Interacts with SEPT8; the interaction inhibits interaction of VAMP2 with SYP. Interacts with SYP; the interaction is inhibited by interaction with SEPT8. Interacts with PICALM. Interacts with alpha-synuclein/SNCA. Interacts with STX3. In terms of processing, phosphorylated by PRKCZ in vitro and this phosphorylation is increased in the presence of WDFY2. (Microbial infection) Targeted and hydrolyzed by C.botulinum neurotoxin type B (BoNT/B, botB) which hydrolyzes the 76-Gln-|-Phe-77 bond and probably inhibits neurotransmitter release. Post-translationally, (Microbial infection) Targeted and hydrolyzed by C.botulinum neurotoxin type D (BoNT/D, botD) which probably hydrolyzes the 59-Lys-|-Leu-60 bond and inhibits neurotransmitter release. Note that humans are not known to be infected by C.botulinum type D. In terms of processing, (Microbial infection) Targeted and hydrolyzed by C.botulinum neurotoxin type F (BoNT/F, botF) which hydrolyzes the 58-Gln-|-Lys-59 bond and probably inhibits neurotransmitter release. (Microbial infection) Targeted and hydrolyzed by C.tetani tetanus toxin (tetX) which hydrolyzes the 76-Gln-|-Phe-77 bond and probably inhibits neurotransmitter release. Nervous system and skeletal muscle.

The protein resides in the cytoplasmic vesicle. Its subcellular location is the secretory vesicle. The protein localises to the synaptic vesicle membrane. It localises to the cell membrane. Involved in the targeting and/or fusion of transport vesicles to their target membrane. Major SNARE protein of synaptic vesicles which mediates fusion of synaptic vesicles to release neurotransmitters. Essential for fast vesicular exocytosis and activity-dependent neurotransmitter release as well as fast endocytosis that mediates rapid reuse of synaptic vesicles. Modulates the gating characteristics of the delayed rectifier voltage-dependent potassium channel KCNB1. This Homo sapiens (Human) protein is Vesicle-associated membrane protein 2.